A 1648-amino-acid chain; its full sequence is Putative 1-phosphatidylinositol-3-phosphate 5-kinase FAB1C (1648 aa).

The segment covering 97–106 has biased composition (basic and acidic residues); that stretch reads YDKVHPRDSP. Disordered stretches follow at residues 97 to 116, 241 to 276, 721 to 746, and 1083 to 1139; these read YDKV…ATES, QEDH…NDDA, SEIP…ENQL, and KTGD…GTSL. The segment covering 1084-1130 has biased composition (basic and acidic residues); the sequence is TGDDNAPRNPEMHDPPKIDRRMQEGSDERDEQSHTDSEANGDNKDPE. The PIPK domain occupies 1316-1639; that stretch reads NLNNRESEPS…RFRKAMTTYF (324 aa).

Component of the PI(3,5)P2 regulatory complex at least composed of ATG18, SAC/FIG4, FAB1 and VAC14. Mg(2+) serves as cofactor. Requires Mn(2+) as cofactor.

The catalysed reaction is a 1,2-diacyl-sn-glycero-3-phospho-(1D-myo-inositol-3-phosphate) + ATP = a 1,2-diacyl-sn-glycero-3-phospho-(1D-myo-inositol-3,5-bisphosphate) + ADP + H(+). Its function is as follows. The PI(3,5)P2 regulatory complex regulates both the synthesis and turnover of phosphatidylinositol 3,5-bisphosphate (PtdIns(3,5)P2). Catalyzes the phosphorylation of phosphatidylinositol 3-phosphate on the fifth hydroxyl of the myo-inositol ring, to form phosphatidylinositol 3,5-bisphosphate. The chain is Putative 1-phosphatidylinositol-3-phosphate 5-kinase FAB1C (FAB1C) from Arabidopsis thaliana (Mouse-ear cress).